Consider the following 765-residue polypeptide: MVKAISSNLGYPRLGEKREWKRALEKFWNGTISEKELLAETKILRLHALKKQQDKGIDLIPVGDFSFYDQVLDTSVTFGIIPKRFQHDGGKVSLNTYFDIARGKNDAVASEMTKWFNTNYHYIVPELADAEPKVLDNRALYYYEEAKKELGIEGKPVLVGPITYLKLGKGSDAKSFEVLLDKFIPAYVEILKELEAAGAKWVQIDEPYLATSFDKKEIALFEKVYQAFQTAVPNLKIELQTYFESLDYYEEVVNLPVAAIGIDFVHDHGDSIKALKAHGFPEDKYLAAGVVDGRNVWRSDLDAKLELLTEIANYVADGKLIVQPSNSLLHVPVTKLSEPDLDEVILGGLSFADQKLEEITILTKALTNGAESVAAELEESRAAVTALNESSHRNNLEVQEAIANLKNVRVDRELPFAERIKLQHAWLKLPLFPTTTIGSFPQSPEVRKTRADWLKGNITDAEYNAFIEKETARWIKIQEDLDIDVLVHGEFERTDMVEYFGQKLAGFQATKFGWVQSYGSRAVRPPLIYGDVAFTEEITVKESVYAQSLTKRPVKGMLTAPVTIINWSFVRDDVPESVVANQVGLALRKEVEALERNGIKVIQVDEPALREGLPLKQARWQKYLDDAVYSFKLTTASVQNDTQIHTHMCYSDFDDIIDTISALDADVISIETSRSHGEIISTFEEVTYDKEIGLGVYDIHSPRVPTVTEIQDNIRRALRAIDAKQFWINPDCGLKTRKEPETIAALQDMIKATKEVRAEYQVLEK.

Residues 18–21 (REWK) and Lys-114 each bind 5-methyltetrahydropteroyltri-L-glutamate. L-homocysteine-binding positions include 437–439 (IGS) and Glu-490. Residues 437-439 (IGS) and Glu-490 each bind L-methionine. 5-methyltetrahydropteroyltri-L-glutamate is bound at residue Trp-567. Asp-605 lines the L-homocysteine pocket. Asp-605 provides a ligand contact to L-methionine. Residue Glu-611 participates in 5-methyltetrahydropteroyltri-L-glutamate binding. Residues His-647, Cys-649, and Glu-671 each coordinate Zn(2+). His-700 acts as the Proton donor in catalysis. Cys-732 is a Zn(2+) binding site.

This sequence belongs to the vitamin-B12 independent methionine synthase family. The cofactor is Zn(2+).

It carries out the reaction 5-methyltetrahydropteroyltri-L-glutamate + L-homocysteine = tetrahydropteroyltri-L-glutamate + L-methionine. Its pathway is amino-acid biosynthesis; L-methionine biosynthesis via de novo pathway; L-methionine from L-homocysteine (MetE route): step 1/1. Catalyzes the transfer of a methyl group from 5-methyltetrahydrofolate to homocysteine resulting in methionine formation. This chain is 5-methyltetrahydropteroyltriglutamate--homocysteine methyltransferase, found in Listeria monocytogenes serotype 4b (strain F2365).